A 761-amino-acid chain; its full sequence is Zinc finger protein 711 (761 aa).

Glycyl lysine isopeptide (Lys-Gly) (interchain with G-Cter in SUMO2) cross-links involve residues lysine 224, lysine 235, and lysine 296. C2H2-type zinc fingers lie at residues 383–408 (YPCHICTKKFKSRGFLKRHMKNHPDH), 414–436 (YQCTDCDFTTNKKVSFHNHLESH), 476–499 (HKCKYCDYETAEQGLLNRHLLAVH), 505–527 (HVCVECGKGFRHPSELKKHMRTH), and 533–556 (YQCQYCIFRCADQSNLKTHIKSKH). A required for transcriptional activation region spans residues 515–761 (RHPSELKKHM…IMRHHKEALM (247 aa)). A C2H2-type 6; atypical zinc finger spans residues 562-584 (YKCEHCPQAFGDERELQRHLDLF). The Zn(2+) site is built by cysteine 564, cysteine 567, and histidine 580. C2H2-type zinc fingers lie at residues 590 to 613 (HQCPHCDHKSTNSSDLKRHIISVH), 619 to 641 (HKCEVCDKGFHRPSELKKHSDIH), 647 to 670 (HQCRHCDFKTSDPFILSGHILSVH), 676 to 698 (LKCKRCKRGFRQQNELKKHMKTH), 704 to 727 (YQCEYCEYSTTDASGFKRHVISIH), and 733 to 755 (HRCEFCKKGFRRPSEKNQHIMRH).

This sequence belongs to the krueppel C2H2-type zinc-finger protein family. In terms of assembly, interacts with PHF8. Expressed in neural tissues.

The protein resides in the nucleus. Its function is as follows. Transcription regulator required for brain development. Probably acts as a transcription factor that binds to the promoter of target genes and recruits PHF8 histone demethylase, leading to activated expression of genes involved in neuron development, such as KDM5C. May compete with transcription factor ARX for activation of expression of KDM5C. The protein is Zinc finger protein 711 (ZNF711) of Homo sapiens (Human).